A 159-amino-acid polypeptide reads, in one-letter code: Na(+)/H(+) antiporter subunit E1 (159 aa).

Helical transmembrane passes span 1–21, 27–47, 60–80, and 101–121; these read MAIQ…VTNS, FVLG…VLPG, LIIT…KIIL, and WQLV…VLGI.

The protein belongs to the CPA3 antiporters (TC 2.A.63) subunit E family. In terms of assembly, may form a heterooligomeric complex that consists of seven subunits: mnhA1, mnhB1, mnhC1, mnhD1, mnhE1, mnhF1 and mnhG1.

It is found in the cell membrane. Its function is as follows. Mnh complex is a Na(+)/H(+) antiporter involved in Na(+) excretion. The sequence is that of Na(+)/H(+) antiporter subunit E1 (mnhE1) from Staphylococcus epidermidis (strain ATCC 35984 / DSM 28319 / BCRC 17069 / CCUG 31568 / BM 3577 / RP62A).